The sequence spans 203 residues: N-(5'-phosphoribosyl)anthranilate isomerase (203 aa).

Belongs to the TrpF family.

It carries out the reaction N-(5-phospho-beta-D-ribosyl)anthranilate = 1-(2-carboxyphenylamino)-1-deoxy-D-ribulose 5-phosphate. The protein operates within amino-acid biosynthesis; L-tryptophan biosynthesis; L-tryptophan from chorismate: step 3/5. The protein is N-(5'-phosphoribosyl)anthranilate isomerase of Thermoanaerobacter pseudethanolicus (strain ATCC 33223 / 39E) (Clostridium thermohydrosulfuricum).